We begin with the raw amino-acid sequence, 573 residues long: Thiol:disulfide interchange protein DsbD (573 aa).

The first 20 residues, 1-20 (MLKRFFLLLSSLLLVCNVQA), serve as a signal peptide directing secretion. Residues 21 to 175 (GLFNNKPQYL…AENLSNNYLS (155 aa)) are Periplasmic-facing. Cystine bridges form between cysteine 121–cysteine 126 and cysteine 191–cysteine 313. Residues 176–196 (IFGFLLLGIGLAFTPCVLPML) traverse the membrane as a helical segment. Topologically, residues 197-227 (PLLSAIVIGHKNRPNTSRALLLSFTYVQGMA) are cytoplasmic. Residues 228 to 248 (LTYTLLGLTVAAIGLPFQVAL) traverse the membrane as a helical segment. Residues 249–251 (QSP) lie on the Periplasmic side of the membrane. The chain crosses the membrane as a helical span at residues 252-272 (AVLISLAVLFTLLAASMFGLF). At 273 to 292 (EIRLPNTWQQKLNALSQQQQ) the chain is on the cytoplasmic side. A helical membrane pass occupies residues 293–313 (GGAVGNVFIMGIIAGLVASPC). Over 314 to 331 (TSAPLSGALLYVAQSGNL) the chain is Periplasmic. The chain crosses the membrane as a helical span at residues 332–352 (LIGGLALYLLALGMGLPLILI). Topologically, residues 353–365 (TVFGNQILPKSGE) are cytoplasmic. A helical membrane pass occupies residues 366–386 (WLFKVKTAFGFVMLALPIFLI). Topologically, residues 387–393 (SRILPSH) are periplasmic. Residues 394–414 (YEPFLWSTLALAFLGWLISSL) form a helical membrane-spanning segment. The Cytoplasmic segment spans residues 415–425 (NYSTMLKQAVR). The helical transmembrane segment at 426-446 (ILLFIAFGLTAYPWANLVWQT) threads the bilayer. Residues 440-573 (ANLVWQTTSN…NQFLAWLNRL (134 aa)) form the Thioredoxin domain. Over 447-573 (TSNTAQPTTP…NQFLAWLNRL (127 aa)) the chain is Periplasmic. Cysteine 490 and cysteine 493 are disulfide-bonded.

Belongs to the thioredoxin family. DsbD subfamily.

The protein resides in the cell inner membrane. It catalyses the reaction [protein]-dithiol + NAD(+) = [protein]-disulfide + NADH + H(+). The catalysed reaction is [protein]-dithiol + NADP(+) = [protein]-disulfide + NADPH + H(+). Its function is as follows. Required to facilitate the formation of correct disulfide bonds in some periplasmic proteins and for the assembly of the periplasmic c-type cytochromes. Acts by transferring electrons from cytoplasmic thioredoxin to the periplasm. This transfer involves a cascade of disulfide bond formation and reduction steps. This chain is Thiol:disulfide interchange protein DsbD, found in Haemophilus ducreyi (strain 35000HP / ATCC 700724).